Reading from the N-terminus, the 643-residue chain is Melanoma-associated antigen C3 (643 aa).

MAGE domains lie at 184-384 and 456-643; these read LDEK…AAGM and LDEK…FCPE. The disordered stretch occupies residues 347 to 421; that stretch reads NPQGLAGHRQ…PQSPLDSCSS (75 aa). Basic and acidic residues predominate over residues 354-363; the sequence is HRQEDGRRGL. Over residues 383-414 the composition is skewed to pro residues; sequence GMPPLPQSPPEIPPQGPPKISPQGPPQSPPQS. Phosphothreonine occurs at positions 478, 484, and 485.

As to expression, expressed in testis. Not expressed in other normal tissues, but is expressed in tumors of different histological origins.

This is Melanoma-associated antigen C3 (MAGEC3) from Homo sapiens (Human).